We begin with the raw amino-acid sequence, 336 residues long: Probable RNA methyltransferase Anae109_4379 (336 aa).

Catalysis depends on glutamate 86, which acts as the Proton acceptor. The 230-residue stretch at 93-322 folds into the Radical SAM core domain; that stretch reads FDTHHTVCLS…PIVRRYSGGQ (230 aa). Cysteine 100 and cysteine 328 form a disulfide bridge. Residues cysteine 107, cysteine 111, and cysteine 114 each coordinate [4Fe-4S] cluster. Residues 154–155, serine 186, and 209–211 contribute to the S-adenosyl-L-methionine site; these read GE and SLN. Cysteine 328 acts as the S-methylcysteine intermediate in catalysis.

This sequence belongs to the radical SAM superfamily. RlmN family. [4Fe-4S] cluster is required as a cofactor.

The protein localises to the cytoplasm. This is Probable RNA methyltransferase Anae109_4379 from Anaeromyxobacter sp. (strain Fw109-5).